A 937-amino-acid polypeptide reads, in one-letter code: Translation initiation factor IF-2 (937 aa).

Disordered regions lie at residues 61–156 (IQAN…KAKQ) and 171–274 (LTQS…SHKI). A compositionally biased stretch (basic and acidic residues) spans 179 to 196 (AKKEISEVKKQEQEIKRH). A compositionally biased stretch (basic residues) spans 197–208 (ENIKRRTGFRVI). The segment covering 237–252 (EDIKKEWQEKDKQEAK) has biased composition (basic and acidic residues). The tr-type G domain maps to 436-605 (ERPPVVTIMG…LIQADIMELK (170 aa)). A G1 region spans residues 445–452 (GHVDHGKT). Residue 445–452 (GHVDHGKT) participates in GTP binding. Residues 470 to 474 (GITQH) form a G2 region. Residues 491–494 (DTPG) are G3. Residues 491-495 (DTPGH) and 545-548 (NKMD) each bind GTP. Residues 545-548 (NKMD) form a G4 region. The segment at 581–583 (SAK) is G5.

The protein belongs to the TRAFAC class translation factor GTPase superfamily. Classic translation factor GTPase family. IF-2 subfamily.

The protein resides in the cytoplasm. One of the essential components for the initiation of protein synthesis. Protects formylmethionyl-tRNA from spontaneous hydrolysis and promotes its binding to the 30S ribosomal subunits. Also involved in the hydrolysis of GTP during the formation of the 70S ribosomal complex. This chain is Translation initiation factor IF-2, found in Helicobacter pylori (strain G27).